Reading from the N-terminus, the 114-residue chain is MEAIAKHRYARTSAQKARLVADQVRGLSVDKALNILTFSPKKAAVLVKKVLESAIANAEHNEGADIDALRVATIMVDEGPSMKRIRPRAKGRADRILKRTAHITVVVSDAKAGR.

The protein belongs to the universal ribosomal protein uL22 family. Part of the 50S ribosomal subunit.

Its function is as follows. This protein binds specifically to 23S rRNA; its binding is stimulated by other ribosomal proteins, e.g. L4, L17, and L20. It is important during the early stages of 50S assembly. It makes multiple contacts with different domains of the 23S rRNA in the assembled 50S subunit and ribosome. Functionally, the globular domain of the protein is located near the polypeptide exit tunnel on the outside of the subunit, while an extended beta-hairpin is found that lines the wall of the exit tunnel in the center of the 70S ribosome. The sequence is that of Large ribosomal subunit protein uL22 from Aeromonas salmonicida (strain A449).